The following is a 139-amino-acid chain: Large ribosomal subunit protein uL16 (139 aa).

The protein belongs to the universal ribosomal protein uL16 family. As to quaternary structure, part of the 50S ribosomal subunit.

In terms of biological role, binds 23S rRNA and is also seen to make contacts with the A and possibly P site tRNAs. The polypeptide is Large ribosomal subunit protein uL16 (Treponema pallidum (strain Nichols)).